Consider the following 331-residue polypeptide: D-alanine--D-alanine ligase (331 aa).

Residues 112 to 314 form the ATP-grasp domain; the sequence is KRIWRSEGLP…YEDLCLRLLA (203 aa). Residue 138–193 participates in ATP binding; the sequence is LQTLGAPMIVKPAREGSTIGLSKVHQAQQCASAYLLAARYDPEVLCEQFIAGDELT. Residues Asp267, Glu281, and Asn283 each contribute to the Mg(2+) site.

This sequence belongs to the D-alanine--D-alanine ligase family. Mg(2+) serves as cofactor. It depends on Mn(2+) as a cofactor.

Its subcellular location is the cytoplasm. It carries out the reaction 2 D-alanine + ATP = D-alanyl-D-alanine + ADP + phosphate + H(+). It functions in the pathway cell wall biogenesis; peptidoglycan biosynthesis. Its function is as follows. Cell wall formation. In Verminephrobacter eiseniae (strain EF01-2), this protein is D-alanine--D-alanine ligase.